Consider the following 116-residue polypeptide: Large ribosomal subunit protein bL19 (116 aa).

It belongs to the bacterial ribosomal protein bL19 family.

Functionally, this protein is located at the 30S-50S ribosomal subunit interface and may play a role in the structure and function of the aminoacyl-tRNA binding site. This chain is Large ribosomal subunit protein bL19, found in Flavobacterium psychrophilum (strain ATCC 49511 / DSM 21280 / CIP 103535 / JIP02/86).